The primary structure comprises 315 residues: Methionyl-tRNA formyltransferase (315 aa).

Residues 2–189 (SESLRIIFAG…LITTLKQLAD (188 aa)) form an N-terminal domain region. Position 113–116 (113–116 (SLLP)) interacts with (6S)-5,6,7,8-tetrahydrofolate. The interval 210 to 315 (KEEARIDWSL…EWFVPGNRLV (106 aa)) is C-terminal domain.

The protein belongs to the Fmt family.

The enzyme catalyses L-methionyl-tRNA(fMet) + (6R)-10-formyltetrahydrofolate = N-formyl-L-methionyl-tRNA(fMet) + (6S)-5,6,7,8-tetrahydrofolate + H(+). In terms of biological role, attaches a formyl group to the free amino group of methionyl-tRNA(fMet). The formyl group appears to play a dual role in the initiator identity of N-formylmethionyl-tRNA by promoting its recognition by IF2 and preventing the misappropriation of this tRNA by the elongation apparatus. This Escherichia coli O157:H7 protein is Methionyl-tRNA formyltransferase.